The following is a 581-amino-acid chain: Adenine deaminase (581 aa).

The protein belongs to the metallo-dependent hydrolases superfamily. Adenine deaminase family. The cofactor is Mn(2+).

It catalyses the reaction adenine + H2O + H(+) = hypoxanthine + NH4(+). The sequence is that of Adenine deaminase from Clostridium botulinum (strain Eklund 17B / Type B).